The primary structure comprises 106 residues: Phosphoribosyl-ATP pyrophosphatase (106 aa).

It belongs to the PRA-PH family.

Its subcellular location is the cytoplasm. It catalyses the reaction 1-(5-phospho-beta-D-ribosyl)-ATP + H2O = 1-(5-phospho-beta-D-ribosyl)-5'-AMP + diphosphate + H(+). The protein operates within amino-acid biosynthesis; L-histidine biosynthesis; L-histidine from 5-phospho-alpha-D-ribose 1-diphosphate: step 2/9. The polypeptide is Phosphoribosyl-ATP pyrophosphatase (Methylobacillus flagellatus (strain ATCC 51484 / DSM 6875 / VKM B-1610 / KT)).